The primary structure comprises 337 residues: MDLDVVNMFVIAGGTLALPILAFVASFLLWPSALIRIYYWYWRRTLGMQVRYVRHEDYQFCYSFRGRPGHKPSILMLHGFSAHKDMWLSMVKFLPKNLHLVCVDMPGHEGTTRSSLDDLSIDGQVKRIHQFVECLKLNKKPFHLVGTSMGGHVAGVYAAHYPSDVCSLSLVCPAGLQYSTDNKFVQRLKELQESAAVEKIPLIPTTPKEMSEMLQLCSYVRFKVPQQILQGLVDVRIPHNTFYRKLFLEIVSEKSRYSLHQNMDKIKVPTQIIWGKQDQVLDVSGADMLAKSIANSQVELLENCGHSVVMERPRKTAKLLVDFLASVHSTDNSKKLD.

Residues 1–19 are Extracellular-facing; that stretch reads MDLDVVNMFVIAGGTLALP. Residues 20–42 form a helical; Signal-anchor for type II membrane protein membrane-spanning segment; the sequence is ILAFVASFLLWPSALIRIYYWYW. The Cytoplasmic segment spans residues 43-337; that stretch reads RRTLGMQVRY…HSTDNSKKLD (295 aa). The 242-residue stretch at 72–313 folds into the AB hydrolase-1 domain; that stretch reads PSILMLHGFS…CGHSVVMERP (242 aa). The active-site Nucleophile is the S148. Residues D278 and H306 each act as charge relay system in the active site.

The protein belongs to the AB hydrolase superfamily.

The protein resides in the late endosome membrane. Its subcellular location is the lysosome membrane. It is found in the mitochondrion membrane. It carries out the reaction Hydrolyzes glycerol monoesters of long-chain fatty acids.. The enzyme catalyses 1-octanoylglycerol + H2O = octanoate + glycerol + H(+). The catalysed reaction is 1-decanoylglycerol + H2O = decanoate + glycerol + H(+). It catalyses the reaction 1-dodecanoylglycerol + H2O = dodecanoate + glycerol + H(+). It carries out the reaction 1-tetradecanoylglycerol + H2O = tetradecanoate + glycerol + H(+). The enzyme catalyses 2-hexadecanoylglycerol + H2O = glycerol + hexadecanoate + H(+). The catalysed reaction is 2-(9Z-octadecenoyl)-glycerol + H2O = glycerol + (9Z)-octadecenoate + H(+). It catalyses the reaction 1-(9Z-octadecenoyl)-glycerol + H2O = glycerol + (9Z)-octadecenoate + H(+). It carries out the reaction 2-(9Z,12Z-octadecadienoyl)-glycerol + H2O = (9Z,12Z)-octadecadienoate + glycerol + H(+). The enzyme catalyses 2-(5Z,8Z,11Z,14Z-eicosatetraenoyl)-glycerol + H2O = glycerol + (5Z,8Z,11Z,14Z)-eicosatetraenoate + H(+). The catalysed reaction is 1-(5Z,8Z,11Z,14Z-eicosatetraenoyl)-glycerol + H2O = glycerol + (5Z,8Z,11Z,14Z)-eicosatetraenoate + H(+). It catalyses the reaction 1-(9Z,12Z-octadecadienoyl)-glycerol + H2O = (9Z,12Z)-octadecadienoate + glycerol + H(+). It carries out the reaction 3-(9Z-octadecenoyl)-sn-glycero-1-phospho-(3'-(9Z-octadecenoyl)-1'-sn-glycerol) + H2O = 3-(9Z-octadecenoyl)-sn-glycero-1-phospho-(1'-sn-glycerol) + (9Z)-octadecenoate + H(+). The enzyme catalyses (S,S)-2-(9Z-octadecenoyl)-sn-glycero-1-phospho-(2'-(9Z-octadecenoyl)-1'-sn-glycerol) + H2O = (S,S)-2-(9Z-octadecenoyl)-sn-glycero-1-phospho-(1'-sn-glycerol) + (9Z)-octadecenoate + H(+). The catalysed reaction is (R,R)-2-(9Z-octadecenoyl)-sn-glycero-3-phospho-(2'-(9Z-octadecenoyl)-3'-sn-glycerol) + H2O = (R,R)-2-(9Z-octadecenoyl)-sn-glycero-3-phospho-(3'-sn-glycerol) + (9Z)-octadecenoate + H(+). Lipase that preferentially hydrolysis medium-chain saturated monoacylglycerols including 2-arachidonoylglycerol. Through 2-arachidonoylglycerol degradation may regulate endocannabinoid signaling pathways. Also has a lysophosphatidyl lipase activity with a preference for lysophosphatidylglycerol among other lysophospholipids. Also able to degrade bis(monoacylglycero)phosphate (BMP) and constitutes the major enzyme for BMP catabolism. BMP, also known as lysobisphosphatidic acid, is enriched in late endosomes and lysosomes and plays a key role in the formation of intraluminal vesicles and in lipid sorting. This is Monoacylglycerol lipase ABHD6 from Bos taurus (Bovine).